A 348-amino-acid polypeptide reads, in one-letter code: Mediator of RNA polymerase II transcription subunit 18 (348 aa).

Basic and acidic residues predominate over residues 152–218; sequence MDVDLEHKDK…KNDEVKHSEV (67 aa). The segment at 152 to 227 is disordered; sequence MDVDLEHKDK…VNLEDGAETG (76 aa). Positions 167–223 form a coiled coil; that stretch reads DTKEKEEDKKEEDKKEEDKKEEDKKEEDKKEEDKKEEEKVEKKNDEVKHSEVNLEDG.

This sequence belongs to the Mediator complex subunit 18 family. Component of the Mediator complex.

It localises to the nucleus. Component of the Mediator complex, a coactivator involved in the regulated transcription of nearly all RNA polymerase II-dependent genes. Mediator functions as a bridge to convey information from gene-specific regulatory proteins to the basal RNA polymerase II transcription machinery. Mediator is recruited to promoters by direct interactions with regulatory proteins and serves as a scaffold for the assembly of a functional preinitiation complex with RNA polymerase II and the general transcription factors. The sequence is that of Mediator of RNA polymerase II transcription subunit 18 (SRB5) from Scheffersomyces stipitis (strain ATCC 58785 / CBS 6054 / NBRC 10063 / NRRL Y-11545) (Yeast).